Reading from the N-terminus, the 424-residue chain is Tyrosine--tRNA ligase (424 aa).

Tyr37 lines the L-tyrosine pocket. Positions 42–51 (PTADSLHLGH) match the 'HIGH' region motif. The residue at position 144 (Lys144) is an N6-acetyllysine. Residues Tyr175 and Gln179 each coordinate L-tyrosine. The 'KMSKS' region motif lies at 235–239 (KFGKT). Lys238 contacts ATP. Residues 357-414 (ADLMQALVDSELQPSRGQARKTIASNAITINGEKQSDPEYFFKEEDRLFGRFTLLRRG) enclose the S4 RNA-binding domain.

Belongs to the class-I aminoacyl-tRNA synthetase family. TyrS type 1 subfamily. As to quaternary structure, homodimer.

The protein resides in the cytoplasm. The catalysed reaction is tRNA(Tyr) + L-tyrosine + ATP = L-tyrosyl-tRNA(Tyr) + AMP + diphosphate + H(+). In terms of biological role, catalyzes the attachment of tyrosine to tRNA(Tyr) in a two-step reaction: tyrosine is first activated by ATP to form Tyr-AMP and then transferred to the acceptor end of tRNA(Tyr). This is Tyrosine--tRNA ligase from Shigella boydii serotype 4 (strain Sb227).